Consider the following 161-residue polypeptide: Large ribosomal subunit protein uL16 (161 aa).

The disordered stretch occupies residues 140–161; sequence LNKGNYKPAKTPVTADDSESSS.

Belongs to the universal ribosomal protein uL16 family. Part of the 50S ribosomal subunit.

Functionally, binds 23S rRNA and is also seen to make contacts with the A and possibly P site tRNAs. The polypeptide is Large ribosomal subunit protein uL16 (Prochlorococcus marinus (strain NATL2A)).